The chain runs to 279 residues: Lactose operon transcription activator (279 aa).

One can recognise an HTH araC/xylS-type domain in the interval 174-272 (QHAVDFINTN…EISASEYRHH (99 aa)). DNA-binding regions (H-T-H motif) lie at residues 191 to 212 (EDVA…KKNL) and 239 to 262 (ISDI…TKHF).

In terms of biological role, transcriptional regulator of the lacPH genes for lactose utilization. This chain is Lactose operon transcription activator (lacR), found in Staphylococcus xylosus.